Here is a 130-residue protein sequence, read N- to C-terminus: Secreted RxLR effector protein 68 (130 aa).

A signal peptide spans 1-29 (MRCVCASIRRTRIIEFLMFFALSSSTASC). An N-linked (GlcNAc...) asparagine glycan is attached at asparagine 36. The short motif at 45-48 (RWLR) is the RxLR element.

It belongs to the RxLR effector family.

It is found in the secreted. Its subcellular location is the host cytoplasm. The protein localises to the host nucleus. In terms of biological role, effector that acts as a broad suppressor of cell death to interrupt plant immunity. Inhibits cell death induced by cell death-inducing proteins, including the PAMP elicitor INF1 from P.infestans. In Plasmopara viticola (Downy mildew of grapevine), this protein is Secreted RxLR effector protein 68.